The following is a 182-amino-acid chain: Large ribosomal subunit protein uL5 (182 aa).

As to quaternary structure, part of the 50S ribosomal subunit; part of the 5S rRNA/uL5/uL18/bL25 (TL7) subcomplex; has also been isolated as a complex with 5S rRNA, bL25 (TL7) and DNA binding protein II. Forms a bridge to the 30S subunit in the 70S ribosome, contacting protein uS13; this bridge is straddled by the 5S rRNA. Contacts the P site tRNA.

Functionally, this is one of the proteins that bind and probably mediate the attachment of the 5S RNA into the large ribosomal subunit, where it forms part of the central protuberance. In the 70S ribosome it contacts protein S13 of the 30S subunit (forming bridge B1b) connecting the head of the 30S subunit to the top of the 50S subunit. The bridge itself contacts the P site tRNA and is implicated in movement during ribosome translocation. Also contacts the P site tRNA independently of the intersubunit bridge; the 5S rRNA and some of its associated proteins might help stabilize positioning of ribosome-bound tRNAs. This chain is Large ribosomal subunit protein uL5 (rplE), found in Thermus thermophilus (strain ATCC 27634 / DSM 579 / HB8).